The sequence spans 1003 residues: SWI/SNF-related matrix-associated actin-dependent regulator of chromatin subfamily A containing DEAD/H box 1 (1003 aa).

Disordered stretches follow at residues 15-130 (KKID…SKYK), 172-235 (GSSR…HFPD), and 274-351 (AKKE…EDYS). Composition is skewed to basic and acidic residues over residues 172 to 188 (GSSR…DSSP), 221 to 235 (KQEA…HFPD), and 274 to 294 (AKKE…DNKS). In terms of domain architecture, CUE spans 221–264 (KQEASVKKLQRHFPDLDKEELREVLQEHDWSFHEALEALKLFAE). Over residues 295 to 311 (SAKAKANQNSNKAMAQN) the composition is skewed to low complexity. Residues 321–333 (KYSENAKRDTRDL) are compositionally biased toward basic and acidic residues. In terms of domain architecture, Helicase ATP-binding spans 486–654 (ALLHKHKVNM…MSLLNFVMPH (169 aa)). Residue 499 to 506 (DEMGLGKT) participates in ATP binding. The DEGH box signature appears at 605–608 (DEGH). A Helicase C-terminal domain is found at 835-997 (ILEKLLSDIK…TIPLDMATLL (163 aa)).

Belongs to the SNF2/RAD54 helicase family.

It is found in the nucleus. Its subcellular location is the chromosome. The enzyme catalyses ATP + H2O = ADP + phosphate + H(+). DNA helicase that possesses intrinsic ATP-dependent nucleosome-remodeling activity and is both required for DNA repair and heterochromatin organization. Promotes DNA end resection of double-strand breaks (DSBs) following DNA damage: probably acts by weakening histone DNA interactions in nucleosomes flanking DSBs. Required for the restoration of heterochromatin organization after replication. The chain is SWI/SNF-related matrix-associated actin-dependent regulator of chromatin subfamily A containing DEAD/H box 1 (smarcad1) from Xenopus tropicalis (Western clawed frog).